Here is a 1032-residue protein sequence, read N- to C-terminus: Calmodulin-binding transcription activator 3 (1032 aa).

The CG-1 DNA-binding region spans 15-141; that stretch reads VGQILSEARH…YLEVKGSRVS (127 aa). The segment at 146-197 is disordered; sequence RMQRTEDAARSPQETGDALTSEHDGYASCSFNQNDHSNHSQTTDSASVNGFH. The span at 174 to 195 shows a compositional bias: polar residues; the sequence is CSFNQNDHSNHSQTTDSASVNG. Serine 272 carries the phosphoserine modification. 3 ANK repeats span residues 661–690, 694–723, and 733–762; these read GGQG…SVDF, NGWT…APGT, and SGST…RAHV. IQ domains are found at residues 852 to 881 and 875 to 904; these read VQAA…RIIK and TRQR…SVGV. The segment at 900–922 is calmodulin-binding; it reads WSVGVLEKVILRWRRKGAGLRGF. A coiled-coil region spans residues 945-987; sequence KQGRKQTEDRLQKALARVKSMVQYPEARDQYRRLLNVVNDIQE. A Phosphoserine modification is found at serine 964.

This sequence belongs to the CAMTA family. Interacts with SR1IP1. Interacts with DSC1. Ubiquinated during pathogen infection. Ubiquitination leads to its subsequent proteasome-dependent degradation, thus allowing the establishment of plant defense response. As to expression, expressed in roots, stems, leaves, carpels, and siliques, but not in stigmas or other parts of the flower.

Its subcellular location is the nucleus. Its function is as follows. Transcription activator that binds to the DNA consensus sequence 5'-[ACG]CGCG[GTC]-3'. Binds calmodulin in a calcium-dependent manner in vitro. Regulates transcriptional activity in response to calcium signals. Involved in freezing tolerance in association with CAMTA1 and CAMTA2. Required for the cold-induced expression of DREB1B/CBF1, DREB1C/CBF2, ZAT12 and GOLS3. Involved in response to cold. Contributes together with CAMTA5 to the positive regulation of the cold-induced expression of DREB1A/CBF3, DREB1B/CBF1 and DREB1C/CBF2. Involved together with CAMTA2 and CAMTA4 in the positive regulation of a general stress response (GSR). Involved in the regulation of GSR amplitude downstream of MEKK1. Involved in the regulation of a set of genes involved in defense responses against pathogens. Involved in the regulation of both basal resistance and systemic acquired resistance (SAR). Acts as negative regulator of plant immunity. Binds to the promoter of the defense-related gene EDS1 and represses its expression. Binds to the promoter of the defense-related gene NDR1 and represses its expression. Involved in defense against insects. Required for tolerance to the generalist herbivore Trichoplusia ni, and contributes to the positive regulation of genes associated with glucosinolate metabolism. Required for tolerance to Bradysia impatiens larvae. Mediates herbivore-induced wound response. Required for wound-induced jasmonate accumulation. Involved in the regulation of ethylene-induced senescence by binding to the promoter of the senescence-inducer gene EIN3 and repressing its expression. The sequence is that of Calmodulin-binding transcription activator 3 from Arabidopsis thaliana (Mouse-ear cress).